The following is a 906-amino-acid chain: Cadherin-2 (906 aa).

The first 25 residues, 1–25 (MCRIVGAPRTLLPLLAALLQASVDA), serve as a signal peptide directing secretion. Positions 26–159 (SGEISLCKTG…HNGYLQRQKR (134 aa)) are excised as a propeptide. Phosphoserine occurs at positions 96 and 135. Cadherin domains follow at residues 160–267 (DWVI…RPEF), 268–392 (LHQV…GEVP), 393–497 (ENRV…NPYF), 498–603 (APNP…DNAP), and 604–714 (QVLP…DVDR). Over 160-724 (DWVIPPINLP…IVGAGLGTGA (565 aa)) the chain is Extracellular. A Ca(2+)-binding site is contributed by E170. N-linked (GlcNAc...) asparagine glycosylation occurs at N190. The Ca(2+) site is built by D226, E228, D259, M260, N261, D262, and N263. N273 carries an N-linked (GlcNAc...) asparagine glycan. 3 residues coordinate Ca(2+): D293, D295, and N301. A glycan (N-linked (GlcNAc...) asparagine) is linked at N325. D353 provides a ligand contact to Ca(2+). N-linked (GlcNAc...) asparagine glycans are attached at residues N357, N402, N572, N622, N651, and N692. Residues 725-746 (IIAILLCIIILLILVLMFVVWM) traverse the membrane as a helical segment. The Cytoplasmic segment spans residues 747-906 (KRRDKERQAK…LADMYGGGDD (160 aa)). The span at 863–880 (SGSTAGSLSSLNSSSSGG) shows a compositional bias: low complexity. Positions 863 to 884 (SGSTAGSLSSLNSSSSGGEQDY) are disordered.

As to quaternary structure, homodimer (via extracellular region). Can also form heterodimers with other cadherins (via extracellular region). Dimerization occurs in trans, i.e. with a cadherin chain from another cell. Interacts with CDCP1. Interacts with PCDH8; this complex may also include TAOK2. The interaction with PCDH8 may lead to internalization through TAOK2/p38 MAPK pathway. Identified in a complex containing FGFR4, NCAM1, CDH2, PLCG1, FRS2, SRC, SHC1, GAP43 and CTTN. May interact with OBSCN (via protein kinase domain 2). Interacts with FBXO45. In terms of processing, cleaved by MMP24. Ectodomain cleavage leads to the generation of a soluble 90 kDa N-terminal soluble fragment and a 45 kDa membrane-bound C-terminal fragment 1 (CTF1), which is further cleaved by gamma-secretase into a 35 kDa. Cleavage in neural stem cells by MMP24 affects CDH2-mediated anchorage of neural stem cells to ependymocytes in the adult subependymal zone, leading to modulate neural stem cell quiescence. May be phosphorylated by OBSCN. Detected in liver, kidney, heart and brain capillaries.

The protein resides in the cell membrane. It localises to the sarcolemma. Its subcellular location is the cell junction. The protein localises to the cell surface. It is found in the desmosome. The protein resides in the adherens junction. Its function is as follows. Calcium-dependent cell adhesion protein; preferentially mediates homotypic cell-cell adhesion by dimerization with a CDH2 chain from another cell. Cadherins may thus contribute to the sorting of heterogeneous cell types. Acts as a regulator of neural stem cells quiescence by mediating anchorage of neural stem cells to ependymocytes in the adult subependymal zone: upon cleavage by MMP24, CDH2-mediated anchorage is affected, leading to modulate neural stem cell quiescence. Plays a role in cell-to-cell junction formation between pancreatic beta cells and neural crest stem (NCS) cells, promoting the formation of processes by NCS cells. Required for proper neurite branching. Required for pre- and postsynaptic organization. CDH2 may be involved in neuronal recognition mechanism. In hippocampal neurons, may regulate dendritic spine density. The protein is Cadherin-2 (CDH2) of Bos taurus (Bovine).